We begin with the raw amino-acid sequence, 281 residues long: Glyoxalase 1 (281 aa).

2 consecutive VOC domains span residues 4–127 (RALH…IGKA) and 132–251 (KVLR…FVGD).

Belongs to the glyoxalase I family. In terms of tissue distribution, expressed in the following tissues in both larvae and adults: pharynx, pharyngeal-intestinal valve, intestine, anal sphincter, vulval muscle, seam cells and the nervous system.

In terms of biological role, thought to act as a glyoxalase. May remove methylglyoxal from mitochondrial proteins. Has roles in reducing oxidative stress and increasing lifespan. The sequence is that of Glyoxalase 1 (glod-4) from Caenorhabditis elegans.